A 57-amino-acid polypeptide reads, in one-letter code: Small ribosomal subunit protein bS21 (57 aa).

Positions 35–57 (REHYEKPSVKRKKKAEAARKKKF) are disordered. The segment covering 43–57 (VKRKKKAEAARKKKF) has biased composition (basic residues).

It belongs to the bacterial ribosomal protein bS21 family.

The sequence is that of Small ribosomal subunit protein bS21 from Alkaliphilus metalliredigens (strain QYMF).